We begin with the raw amino-acid sequence, 60 residues long: uncharacterized protein (60 aa).

This is an uncharacterized protein from Acidianus convivator (ATV).